Here is a 366-residue protein sequence, read N- to C-terminus: Erythronate-4-phosphate dehydrogenase (366 aa).

Positions 46 and 67 each coordinate substrate. 2 residues coordinate NAD(+): aspartate 147 and threonine 175. The active site involves arginine 208. Aspartate 228 contributes to the NAD(+) binding site. Residue glutamate 233 is part of the active site. Histidine 250 (proton donor) is an active-site residue. Glycine 253 lines the NAD(+) pocket. Tyrosine 254 contributes to the substrate binding site.

This sequence belongs to the D-isomer specific 2-hydroxyacid dehydrogenase family. PdxB subfamily. As to quaternary structure, homodimer.

It is found in the cytoplasm. It carries out the reaction 4-phospho-D-erythronate + NAD(+) = (R)-3-hydroxy-2-oxo-4-phosphooxybutanoate + NADH + H(+). It participates in cofactor biosynthesis; pyridoxine 5'-phosphate biosynthesis; pyridoxine 5'-phosphate from D-erythrose 4-phosphate: step 2/5. Catalyzes the oxidation of erythronate-4-phosphate to 3-hydroxy-2-oxo-4-phosphonooxybutanoate. The sequence is that of Erythronate-4-phosphate dehydrogenase from Coxiella burnetii (strain Dugway 5J108-111).